Here is a 558-residue protein sequence, read N- to C-terminus: MLSIKKDLLSALAIALEQLSPGAGDKAAFESPKVAAHGDFACTAAMQLAKPLKQNPRQTAESLRARLLLAPAFERWVEAIEIAGPGFINIRLKPAAKQETVREVLQAGAQYGTQPTDHERKMIVEFVSANPTGPLHVGHGRQAALGDAICNLHATQGLDVWREFYYNDAGVQIHTLATSTQARAKGLKPGDANWPEPAYNGDYIDDIARDFLAKKTVKSDDREFTASGDVEDMEAIRQFAVAYLRHEQDLDLKAFSVKFDNYYLESSLYSSGRVESTVQRLKDAGKTYEQDGALWLRSTDYGDDKDRVMKKSDGTFTYFVPDVAYHLAKWERGFTKAVNIQGMDHHGTIARVRAGLQAANAGIPAGYPDYVLHTMVRVVRHGEEVKISKRAGSYVTLRDLIEWTSADAVRFFLLSRKPDTEYIFDIDLALAKNNENPVYYVQYAHARICSILTAWGGDESQFGHVDLSPLASPQAQALMLLLAKYTDMLSHAAAGFAPHDVAFYLRELAACYHSYYDAERILVDDEAVKLARLALVAATAQVLHNGLAVLGVSAPRKM.

A 'HIGH' region motif is present at residues Ala129–His139.

It belongs to the class-I aminoacyl-tRNA synthetase family. Monomer.

The protein localises to the cytoplasm. It catalyses the reaction tRNA(Arg) + L-arginine + ATP = L-arginyl-tRNA(Arg) + AMP + diphosphate. The protein is Arginine--tRNA ligase of Polaromonas naphthalenivorans (strain CJ2).